A 312-amino-acid chain; its full sequence is MNAGILGVGKYVPERILTNFDLEKMMETSDEWIRTRTGIEERRIARDDEYTHDLAYEAAKVAIENAGLTPNDIDLFIVATVTQEATFPSVANIIQDRLGAKNAAGMDVEAACAGFTFGVVTAAQFIKTGAYKNIVVVGADKLSKITNWDDRATAVLFGDGAGAIVMGPVSDDHGLLSFDLGSDGSGGKYLNLDENKKIYMNGREVFRFAVRQMGEASLRVLERAGLEKEDLDLLIPHQANIRIMEASRERLNLPEEKLMKTVHKYGNTSSSSIALALVDAVEEGRIKDNDNVLLVGFGGGLTWGALIIRWGK.

Active-site residues include Cys112 and His237. Residues 238–242 (QANIR) are ACP-binding. Asn267 is an active-site residue.

The protein belongs to the thiolase-like superfamily. FabH family. In terms of assembly, homodimer.

It localises to the cytoplasm. The enzyme catalyses malonyl-[ACP] + acetyl-CoA + H(+) = 3-oxobutanoyl-[ACP] + CO2 + CoA. It participates in lipid metabolism; fatty acid biosynthesis. Functionally, catalyzes the condensation reaction of fatty acid synthesis by the addition to an acyl acceptor of two carbons from malonyl-ACP. Catalyzes the first condensation reaction which initiates fatty acid synthesis and may therefore play a role in governing the total rate of fatty acid production. Possesses both acetoacetyl-ACP synthase and acetyl transacylase activities. Its substrate specificity determines the biosynthesis of branched-chain and/or straight-chain of fatty acids. In Listeria welshimeri serovar 6b (strain ATCC 35897 / DSM 20650 / CCUG 15529 / CIP 8149 / NCTC 11857 / SLCC 5334 / V8), this protein is Beta-ketoacyl-[acyl-carrier-protein] synthase III.